The following is a 547-amino-acid chain: G protein-coupled receptor associated sorting protein 3 (547 aa).

Basic residues predominate over residues 1–10; that stretch reads MAGTKNKTRA. 2 disordered regions span residues 1–32 and 80–102; these read MAGTKNKTRAQAKTEKKAAIQAKAGAEREATG and TLGKAMGDFTPKAGNESTSSTCK.

The protein belongs to the GPRASP family. In terms of assembly, homodimer. In terms of tissue distribution, highly expressed in brain. Not expressed in lung or liver. Down-regulated in brain from patients suffering from Alzheimer disease.

It localises to the cytoplasm. It is found in the nucleus. Its function is as follows. Survival and differentiation promoting protein that plays a role in the regulation of neurosynaptogenesis. Induces phosphatase PP2A activity which results in APP dephosphorylation and inhibits BACE1-mediated processing of APP. The sequence is that of G protein-coupled receptor associated sorting protein 3 from Homo sapiens (Human).